Here is a 124-residue protein sequence, read N- to C-terminus: Protein YobA (124 aa).

An N-terminal signal peptide occupies residues 1–26 (MASTARSLRYALAILTTSLVTPSVWA). 2 residues coordinate Cu cation: H27 and H113.

Belongs to the CopC family.

It localises to the periplasm. The sequence is that of Protein YobA (yobA) from Escherichia coli O6:H1 (strain CFT073 / ATCC 700928 / UPEC).